We begin with the raw amino-acid sequence, 353 residues long: Phospho-N-acetylmuramoyl-pentapeptide-transferase (353 aa).

Transmembrane regions (helical) follow at residues 16-36 (YISV…MYLM), 64-84 (AGTP…ATVL), 88-108 (LNNF…LIGI), 130-150 (LIFQ…YGHS), 160-180 (FPLF…IVGS), 198-218 (SILA…AVFA), 228-248 (IAGE…AFLW), 256-276 (VFMG…LAIV), 281-301 (ILLL…ILQV), and 330-350 (KIIV…LLSL).

This sequence belongs to the glycosyltransferase 4 family. MraY subfamily. Requires Mg(2+) as cofactor.

The protein resides in the cell inner membrane. The enzyme catalyses UDP-N-acetyl-alpha-D-muramoyl-L-alanyl-gamma-D-glutamyl-meso-2,6-diaminopimeloyl-D-alanyl-D-alanine + di-trans,octa-cis-undecaprenyl phosphate = di-trans,octa-cis-undecaprenyl diphospho-N-acetyl-alpha-D-muramoyl-L-alanyl-D-glutamyl-meso-2,6-diaminopimeloyl-D-alanyl-D-alanine + UMP. Its pathway is cell wall biogenesis; peptidoglycan biosynthesis. Its function is as follows. Catalyzes the initial step of the lipid cycle reactions in the biosynthesis of the cell wall peptidoglycan: transfers peptidoglycan precursor phospho-MurNAc-pentapeptide from UDP-MurNAc-pentapeptide onto the lipid carrier undecaprenyl phosphate, yielding undecaprenyl-pyrophosphoryl-MurNAc-pentapeptide, known as lipid I. The polypeptide is Phospho-N-acetylmuramoyl-pentapeptide-transferase (Aliarcobacter butzleri (strain RM4018) (Arcobacter butzleri)).